Consider the following 63-residue polypeptide: Large ribosomal subunit protein uL30 (63 aa).

This sequence belongs to the universal ribosomal protein uL30 family. Part of the 50S ribosomal subunit.

This Stenotrophomonas maltophilia (strain K279a) protein is Large ribosomal subunit protein uL30.